Consider the following 732-residue polypeptide: MPPPSDIVKVAIEWPGANAQLLEIDQKRPLASIIKEVCDGWSLPNPEYYTLRYADGPQLYVTEQTRNDIKNGTILQLAVSPSRAARQLMERTQSSSMETRLDAMKELAKLSADVTFATEFINMDGIIVLTRLVESGTKLLSHYSEMLAFTLTAFLELMDHGIVSWDMVSVTFIKQIAGYVSQPMVDVSILQRSLAILESMVLNSQSLYQKIAEEITVGQLISHLQVSNQEIQTYAIALINALFLKAPEDKRQDKHLNPLDLPVTDMANAFAQKHLRSIILNHVIRGNRPIKTEMAHQLYVLQVLTFNLLEERMMTKMDPNDQAQRDIIFELRRIAFDAESDPSNVPGSGTEKRKAMYTKDYKMLGFTNHINPALDFTQTPPGMLALDNMLYLAKVHQDTYIRIVLENSSREDKHECPFGRSAIELTKMLCEILQVGELPNEGRNDYHPMFFTHDRAFEELFGICIQLLNKTWKEMRATAEDFNKVMQVVREQITRALPSKPNSLDQFKSKLRSLSYSEILRLRQSERMSQDDFQSPPIVELREKIQPEILELIKQQRLNRLCEGSSFRKIGNRRRQERFWHCRLALNHKVLHYGDLDDNPQGEVTFESLQEKIPVADIKAIVTGKDCPHMKEKSALKQNKEVLELAFSILYDPDETLNFIAPNKYEYCIWIDGLSALLGKDMSSELTKSDLDTLLSMEMKLRLLDLENIQIPEAPPPVPKEPSSYDFVYHYG.

Tyrosine 48 is modified (phosphotyrosine). Residues 323–497 (AQRDIIFELR…VVREQITRAL (175 aa)) enclose the ELMO domain. Serine 515 carries the phosphoserine modification. The PH domain maps to 565-686 (SSFRKIGNRR…LLGKDMSSEL (122 aa)). The SH3-binding signature appears at 712-719 (PEAPPPVP). A Phosphotyrosine modification is found at tyrosine 729.

In terms of assembly, interacts directly with the SH3-domain of DOCK1 via its SH3-binding site. Probably forms a heterotrimeric complex with DOCK1 and RAC1. Interacts with ARHGEF16, DOCK4 and EPHA2; mediates activation of RAC1 by EPHA2. Interacts with ADGRB3. Interacts with AUTS2; the interaction is direct.

It is found in the cytoplasm. The protein localises to the cytosol. Its subcellular location is the membrane. Involved in cytoskeletal rearrangements required for phagocytosis of apoptotic cells and cell motility. Acts in association with DOCK1 and CRK. Was initially proposed to be required in complex with DOCK1 to activate Rac Rho small GTPases. May enhance the guanine nucleotide exchange factor (GEF) activity of DOCK1. This is Engulfment and cell motility protein 2 (Elmo2) from Mus musculus (Mouse).